A 420-amino-acid polypeptide reads, in one-letter code: Serine hydroxymethyltransferase (420 aa).

Residues Leu-121 and 125-127 contribute to the (6S)-5,6,7,8-tetrahydrofolate site; that span reads GHL. Lys-230 carries the post-translational modification N6-(pyridoxal phosphate)lysine. Residue 354–356 coordinates (6S)-5,6,7,8-tetrahydrofolate; sequence SPF.

This sequence belongs to the SHMT family. In terms of assembly, homodimer. Pyridoxal 5'-phosphate is required as a cofactor.

The protein localises to the cytoplasm. The enzyme catalyses (6R)-5,10-methylene-5,6,7,8-tetrahydrofolate + glycine + H2O = (6S)-5,6,7,8-tetrahydrofolate + L-serine. It functions in the pathway one-carbon metabolism; tetrahydrofolate interconversion. The protein operates within amino-acid biosynthesis; glycine biosynthesis; glycine from L-serine: step 1/1. In terms of biological role, catalyzes the reversible interconversion of serine and glycine with tetrahydrofolate (THF) serving as the one-carbon carrier. This reaction serves as the major source of one-carbon groups required for the biosynthesis of purines, thymidylate, methionine, and other important biomolecules. Also exhibits THF-independent aldolase activity toward beta-hydroxyamino acids, producing glycine and aldehydes, via a retro-aldol mechanism. This Rickettsia africae (strain ESF-5) protein is Serine hydroxymethyltransferase.